A 951-amino-acid polypeptide reads, in one-letter code: Cation channel sperm-associated auxiliary subunit epsilon (951 aa).

Residues 1–19 (MSAREVAVLLLWLSCYGSA) form the signal peptide. At 20–903 (LWRYSTNSPN…ETFGLIPSPS (884 aa)) the chain is on the extracellular side. Disulfide bonds link C57/C71, C101/C206, C246/C336, and C410/C413. N-linked (GlcNAc...) asparagine glycans are attached at residues N61 and N114. N414, N472, N487, N493, and N535 each carry an N-linked (GlcNAc...) asparagine glycan. Disulfide bonds link C583–C690, C703–C885, C719–C752, and C804–C835. Residue N796 is glycosylated (N-linked (GlcNAc...) asparagine). N854, N881, and N886 each carry an N-linked (GlcNAc...) asparagine glycan. Residues 904 to 924 (VYLVASFLFVLMLLFFTILVL) form a helical membrane-spanning segment. The Cytoplasmic portion of the chain corresponds to 925 to 951 (SYFRYMRIYRRYIYEPLHKPQRKRKKN).

The protein belongs to the CATSPERD family. As to quaternary structure, component of the CatSper complex or CatSpermasome composed of the core pore-forming members CATSPER1, CATSPER2, CATSPER3 and CATSPER4 as well as auxiliary members CATSPERB, CATSPERG, CATSPERD, CATSPERE, CATSPERZ, C2CD6/CATSPERT, TMEM249, TMEM262 and EFCAB9. HSPA1 may be an additional auxiliary complex member. The core complex members CATSPER1, CATSPER2, CATSPER3 and CATSPER4 form a heterotetrameric channel. The auxiliary CATSPERB, CATSPERG, CATSPERD and CATSPERE subunits form a pavilion-like structure over the pore which stabilizes the complex through interactions with CATSPER4, CATSPER3, CATSPER1 and CATSPER2 respectively. TMEM262/CATSPERH interacts with CATSPERB, further stabilizing the complex. C2CD6/CATSPERT interacts at least with CATSPERD and is required for targeting the CatSper complex in the flagellar membrane.

It localises to the cell projection. The protein localises to the cilium. Its subcellular location is the flagellum membrane. In terms of biological role, auxiliary component of the CatSper complex, a complex involved in sperm cell hyperactivation. Sperm cell hyperactivation is needed for sperm motility which is essential late in the preparation of sperm for fertilization. This is Cation channel sperm-associated auxiliary subunit epsilon from Homo sapiens (Human).